The chain runs to 280 residues: UBX domain-containing protein 10 (280 aa).

A disordered region spans residues 41–94 (SAKGRTRPSLQKSQGVEVCAHHIPSPPPAIPYELPSSQKPGACAPKSPNQGASD). At S87 the chain carries Phosphoserine. One can recognise a UBX domain in the interval 194 to 271 (DQEPRLLLAV…RIPHKSVLGI (78 aa)).

The protein belongs to the UBXN10 family. As to quaternary structure, interacts with CLUAP1; the interaction is direct and mediates interaction with the intraflagellar transport complex B (IFT-B). Interacts with VCP; the interaction is direct.

The protein localises to the cell projection. It is found in the cilium. Functionally, VCP/p97-binding protein required for ciliogenesis. Acts as a tethering factor that facilitates recruitment of VCP/p97 to the intraflagellar transport complex B (IFT-B) in cilia. UBX domain-containing proteins act as tethering factors for VCP/p97 and may specify substrate specificity of VCP/p97. This is UBX domain-containing protein 10 from Homo sapiens (Human).